Consider the following 88-residue polypeptide: L-amino-acid oxidase (88 aa).

FAD-binding positions include Glu74 and 81 to 86 (GWIDST). 81–82 (GW) provides a ligand contact to substrate.

Belongs to the flavin monoamine oxidase family. FIG1 subfamily. In terms of assembly, homodimer; non-covalently linked. FAD is required as a cofactor. In terms of processing, N-glycosylated. Expressed by the venom gland.

The protein resides in the secreted. It catalyses the reaction an L-alpha-amino acid + O2 + H2O = a 2-oxocarboxylate + H2O2 + NH4(+). It carries out the reaction L-leucine + O2 + H2O = 4-methyl-2-oxopentanoate + H2O2 + NH4(+). The enzyme catalyses L-phenylalanine + O2 + H2O = 3-phenylpyruvate + H2O2 + NH4(+). The catalysed reaction is L-tryptophan + O2 + H2O = indole-3-pyruvate + H2O2 + NH4(+). It catalyses the reaction L-methionine + O2 + H2O = 4-methylsulfanyl-2-oxobutanoate + H2O2 + NH4(+). It carries out the reaction L-isoleucine + O2 + H2O = (S)-3-methyl-2-oxopentanoate + H2O2 + NH4(+). The enzyme catalyses L-arginine + O2 + H2O = 5-guanidino-2-oxopentanoate + H2O2 + NH4(+). The catalysed reaction is L-histidine + O2 + H2O = 3-(imidazol-5-yl)pyruvate + H2O2 + NH4(+). It catalyses the reaction L-asparagine + O2 + H2O = 2-oxosuccinamate + H2O2 + NH4(+). It carries out the reaction L-valine + O2 + H2O = 3-methyl-2-oxobutanoate + H2O2 + NH4(+). The enzyme catalyses L-glutamate + O2 + H2O = H2O2 + 2-oxoglutarate + NH4(+). Its function is as follows. Catalyzes an oxidative deamination of predominantly hydrophobic and aromatic L-amino acids, thus producing hydrogen peroxide that may contribute to the diverse toxic effects of this enzyme. Is highly active on L-Met, L-Leu, L-Phe, L-Ile, and L-Arg, moderately active on L-His, L-Trp, L-Asn, L-Glu, and L-Val, and weakly or not active on L-Gln, L-Lys, L-Asp, L-Ala, L-Tyr, L-Ser, L-Pro, L-Gly, L-Thr, and L-Cys. Exhibits diverse biological activities, such as hemorrhage, hemolysis, edema, apoptosis of vascular endothelial cells or tumor cell lines, antibacterial and antiparasitic activities. In addition, this protein has an ability to induce apoptosis in cultured HeLa and K562 cells, and inhibits ADP-induced platelet aggregation dose-dependently. Effects of snake L-amino oxidases on platelets are controversial, since they either induce aggregation or inhibit agonist-induced aggregation. These different effects are probably due to different experimental conditions. In Vipera berus berus (Common viper), this protein is L-amino-acid oxidase.